An 835-amino-acid chain; its full sequence is Protein translocase subunit SecA (835 aa).

Residues Gln-85, 103–107, and Asp-492 each bind ATP; that span reads GEGKT. The Zn(2+) site is built by Cys-819, Cys-821, Cys-830, and Cys-831.

Belongs to the SecA family. In terms of assembly, monomer and homodimer. Part of the essential Sec protein translocation apparatus which comprises SecA, SecYEG and auxiliary proteins SecDF. Other proteins may also be involved. It depends on Zn(2+) as a cofactor.

The protein localises to the cell membrane. It is found in the cytoplasm. The catalysed reaction is ATP + H2O + cellular proteinSide 1 = ADP + phosphate + cellular proteinSide 2.. Functionally, part of the Sec protein translocase complex. Interacts with the SecYEG preprotein conducting channel. Has a central role in coupling the hydrolysis of ATP to the transfer of proteins into and across the cell membrane, serving as an ATP-driven molecular motor driving the stepwise translocation of polypeptide chains across the membrane. This chain is Protein translocase subunit SecA, found in Clostridium botulinum (strain Okra / Type B1).